The primary structure comprises 500 residues: Trehalose-6-phosphate synthase (500 aa).

Residue Arg-28 coordinates D-glucose 6-phosphate. 48–49 serves as a coordination point for UDP-alpha-D-glucose; that stretch reads GG. Residues Tyr-104 and Asp-158 each contribute to the D-glucose 6-phosphate site. Arg-300 and Lys-305 together coordinate UDP-alpha-D-glucose. Residue Arg-338 participates in D-glucose 6-phosphate binding. 403–407 provides a ligand contact to UDP-alpha-D-glucose; sequence LVAKE.

This sequence belongs to the glycosyltransferase 20 family. Homotetramer.

The enzyme catalyses ADP-alpha-D-glucose + D-glucose 6-phosphate = alpha,alpha-trehalose 6-phosphate + ADP + H(+). It carries out the reaction CDP-alpha-D-glucose + D-glucose 6-phosphate = alpha,alpha-trehalose 6-phosphate + CDP + H(+). It catalyses the reaction GDP-alpha-D-glucose + D-glucose 6-phosphate = alpha,alpha-trehalose 6-phosphate + GDP + H(+). The catalysed reaction is TDP-alpha-D-glucose + D-glucose 6-phosphate = 5-methyl-UDP + alpha,alpha-trehalose 6-phosphate + H(+). The enzyme catalyses D-glucose 6-phosphate + UDP-alpha-D-glucose = alpha,alpha-trehalose 6-phosphate + UDP + H(+). It functions in the pathway glycan biosynthesis; trehalose biosynthesis. In terms of biological role, probably involved in the osmoprotection via the biosynthesis of trehalose and in the production of glycogen and alpha-glucan via the TreS-Pep2 branch involved in the biosynthesis of maltose-1-phosphate (M1P). Catalyzes the transfer of glucose from UDP-glucose (UDP-Glc) to D-glucose 6-phosphate (Glc-6-P) to form trehalose-6-phosphate. Probably also able to use ADP-Glc, CDP-Glc, GDP-Glc and TDP-Glc as glucosyl donors. This is Trehalose-6-phosphate synthase from Mycobacterium marinum (strain ATCC BAA-535 / M).